The primary structure comprises 851 residues: Internalin J (851 aa).

An N-terminal signal peptide occupies residues 1–25; the sequence is MKTTKIVIASLVSLTMVSNPLLTFA. 14 LRR repeats span residues 94–115, 116–136, 137–157, 158–179, 180–200, 201–221, 222–243, 244–263, 264–284, 285–306, 316–325, 338–357, 359–368, and 380–402; these read TLTS…EKLT, GLTK…SQNT, NLTY…TPLT, KLTY…QNPL, LTYL…HNTQ, LTEL…TPQT, QLTT…QNKL, LNRL…NQNI, QLTF…TPLT, QLTY…TLSK, DLLEIDLTHN, KIKE…DCQA, GITELDLSQN, and ELTE…NAHI. 4 consecutive MucBP domains span residues 506 to 568, 576 to 638, 647 to 709, and 717 to 779; these read PIKG…SQSV, IVAA…AQTV, APEK…SQTV, and IEAA…AQTV. Positions 786–825 are disordered; it reads NTNTDQPLPTKKPTNTTPTKPSNLKTTEVKKASDTLPKTG. Low complexity predominate over residues 792-811; the sequence is PLPTKKPTNTTPTKPSNLKT. The LPXTG sorting signal signature appears at 821–825; sequence LPKTG. Threonine 824 bears the Pentaglycyl murein peptidoglycan amidated threonine mark. Positions 825-851 are cleaved as a propeptide — removed by sortase A; it reads GDSAPWKSALLGVFLSSTALVIWKKKK.

The protein belongs to the internalin family. As to quaternary structure, nearly full-length mature protein and an internal LRR-containing fragment interact in vitro with human intestinal mucin-2 (MUC2) but not with mucin-1. LRR fragment binding is slightly better at pH 5.5, (the pH of the intestine) than at pH 7.4.

The protein localises to the secreted. It is found in the cell wall. Its activity is regulated as follows. Despite being transcribed during bacterial growth in culture the protein is only detected in infected mice. Functionally, involved in several steps of L.monocytogenes infection by both intravenous and oral infection. Probably acts as an adhesion; upon ectopic expression in L.innocula bacteria adhere better to human cell lines. The chain is Internalin J (inlJ) from Listeria monocytogenes serovar 1/2a (strain ATCC BAA-679 / EGD-e).